The following is a 1264-amino-acid chain: Valine--tRNA ligase (1264 aa).

Ser2 carries the post-translational modification N-acetylserine. Positions 89–219 (GSRAAVLVQQ…YSGARSVTQQ (131 aa)) constitute a GST C-terminal domain. Polar residues predominate over residues 218-230 (QQPGSEITAPQKT). A disordered region spans residues 218–296 (QQPGSEITAP…GEKKDVSGTM (79 aa)). Composition is skewed to basic and acidic residues over residues 234 to 248 (LKKE…EKFQ) and 260 to 275 (HGEK…KRDP). The short motif at 344 to 354 (PNVTGSLHLGH) is the 'HIGH' region element. A phosphoserine mark is found at Ser437 and Ser527. Position 645 is an N6-acetyllysine (Lys645). The short motif at 862–866 (KMSKS) is the 'KMSKS' region element. Lys865 provides a ligand contact to ATP.

The protein belongs to the class-I aminoacyl-tRNA synthetase family. As to quaternary structure, forms high-molecular-mass aggregates with elongation factor 1.

The catalysed reaction is tRNA(Val) + L-valine + ATP = L-valyl-tRNA(Val) + AMP + diphosphate. Its activity is regulated as follows. Can be regulated by protein kinase C-dependent phosphorylation. The sequence is that of Valine--tRNA ligase (Vars1) from Rattus norvegicus (Rat).